We begin with the raw amino-acid sequence, 246 residues long: Probable cytokinin riboside 5'-monophosphate phosphoribohydrolase LOGL5 (246 aa).

Residues 1–10 show a composition bias toward basic and acidic residues; it reads MMMENSREQQ. Positions 1 to 28 are disordered; the sequence is MMMENSREQQPESSPANNNSKKKKKKKT. Substrate-binding positions include Glu103, 121–122, 138–144, and Thr150; these read RK and GYGTLEE.

It belongs to the LOG family. As to expression, expressed in roots and leaves.

It carries out the reaction N(6)-(dimethylallyl)adenosine 5'-phosphate + H2O = N(6)-dimethylallyladenine + D-ribose 5-phosphate. The enzyme catalyses 9-ribosyl-trans-zeatin 5'-phosphate + H2O = trans-zeatin + D-ribose 5-phosphate. In terms of biological role, cytokinin-activating enzyme working in the direct activation pathway. Phosphoribohydrolase that converts inactive cytokinin nucleotides to the biologically active free-base forms. The protein is Probable cytokinin riboside 5'-monophosphate phosphoribohydrolase LOGL5 (LOGL5) of Oryza sativa subsp. japonica (Rice).